The sequence spans 161 residues: Regulator of ribonuclease activity A (161 aa).

This sequence belongs to the RraA family. As to quaternary structure, homotrimer. Binds to both RNA-binding sites in the C-terminal region of Rne and to RhlB.

The protein localises to the cytoplasm. Its function is as follows. Globally modulates RNA abundance by binding to RNase E (Rne) and regulating its endonucleolytic activity. Can modulate Rne action in a substrate-dependent manner by altering the composition of the degradosome. Modulates RNA-binding and helicase activities of the degradosome. This Shewanella oneidensis (strain ATCC 700550 / JCM 31522 / CIP 106686 / LMG 19005 / NCIMB 14063 / MR-1) protein is Regulator of ribonuclease activity A.